Here is a 297-residue protein sequence, read N- to C-terminus: uncharacterized protein (297 aa).

The 60-residue stretch at 1-60 (MNIELRHLRYFVAVAEELHFGRAAARLNISQPPLSQQIQALEQQIGARLLARTNRSVLLT) folds into the HTH lysR-type domain. Residues 20-40 (FGRAAARLNISQPPLSQQIQA) constitute a DNA-binding region (H-T-H motif).

Belongs to the LysR transcriptional regulatory family.

This is an uncharacterized protein from Escherichia coli (strain K12).